Here is a 109-residue protein sequence, read N- to C-terminus: Small ribosomal subunit protein uS17 (109 aa).

This sequence belongs to the universal ribosomal protein uS17 family. As to quaternary structure, part of the 30S ribosomal subunit.

Its function is as follows. One of the primary rRNA binding proteins, it binds specifically to the 5'-end of 16S ribosomal RNA. The polypeptide is Small ribosomal subunit protein uS17 (Methanococcoides burtonii (strain DSM 6242 / NBRC 107633 / OCM 468 / ACE-M)).